Reading from the N-terminus, the 263-residue chain is Phosphatidylglycerol--prolipoprotein diacylglyceryl transferase (263 aa).

Helical transmembrane passes span 15–35, 52–72, 83–103, and 112–132; these read ISIH…VYLA, FILL…VIFQ, IFAI…GAAV, and AIAV…AQSI. Arg134 contributes to the a 1,2-diacyl-sn-glycero-3-phospho-(1'-sn-glycerol) binding site. 3 helical membrane-spanning segments follow: residues 170 to 190, 200 to 220, and 227 to 247; these read VPTF…ILGL, GDVT…IEGM, and FVGL…GAVL.

The protein belongs to the Lgt family.

It is found in the cell membrane. It catalyses the reaction L-cysteinyl-[prolipoprotein] + a 1,2-diacyl-sn-glycero-3-phospho-(1'-sn-glycerol) = an S-1,2-diacyl-sn-glyceryl-L-cysteinyl-[prolipoprotein] + sn-glycerol 1-phosphate + H(+). The protein operates within protein modification; lipoprotein biosynthesis (diacylglyceryl transfer). Functionally, catalyzes the transfer of the diacylglyceryl group from phosphatidylglycerol to the sulfhydryl group of the N-terminal cysteine of a prolipoprotein, the first step in the formation of mature lipoproteins. The chain is Phosphatidylglycerol--prolipoprotein diacylglyceryl transferase from Streptococcus thermophilus (strain CNRZ 1066).